Consider the following 332-residue polypeptide: MATRAVARRKSAAGETSGSATSVRANGGELADRDLVGMYLDEIARTPLLDAAKEVELSQTIEAGVFARQVLEGYEETGADATREELQALIDESERAKDVFIRSNLRLVVAVARRYPRSGLPLLDLIQEGNAGLVRAVEKFDYRKGFKFSTYATWWIRQAITRSIADQSRTIRLPVHLVEELGRIRRVQREFNREHGREPEPAEIAAELGSTPERVTDVLDWARDPVSLNMSVDDEGETQFGDLLEDTSAVSPEQSVLTLLRSEELDDLIGRLDPRTASIIKMRYGIDDGRERTLTEVGKEHGLTRERIRQIEKHALLELKKLARDTGFEAAA.

Over residues 1–11 (MATRAVARRKS) the composition is skewed to basic residues. The interval 1-25 (MATRAVARRKSAAGETSGSATSVRA) is disordered. A compositionally biased stretch (low complexity) spans 13–22 (AGETSGSATS). The Polymerase core binding motif lies at 124–137 (DLIQEGNAGLVRAV). Residues 294–313 (LTEVGKEHGLTRERIRQIEK) constitute a DNA-binding region (H-T-H motif).

It belongs to the sigma-70 factor family. Interacts transiently with the RNA polymerase catalytic core.

Functionally, sigma factors are initiation factors that promote the attachment of RNA polymerase to specific initiation sites and are then released. This Streptomyces coelicolor (strain ATCC BAA-471 / A3(2) / M145) protein is RNA polymerase principal sigma factor HrdD (hrdD).